Here is a 152-residue protein sequence, read N- to C-terminus: Inner membrane protein YbbJ (152 aa).

The chain crosses the membrane as a helical span at residues 1–21 (MMELMVVHPHIFWLSLGGLLL). Residues 22 to 31 (AAEMLGGNGY) lie on the Cytoplasmic side of the membrane. The helical transmembrane segment at 32–52 (LLWSGVAAVITGLVVWLVPLG) threads the bilayer. The Periplasmic segment spans residues 53 to 54 (WE). Residues 55–75 (WQGVMFAILTLLAAWLWWKWL) traverse the membrane as a helical segment. Residues 76–152 (SRRVREQKHS…ITLHIRAVSS (77 aa)) are Cytoplasmic-facing.

To M.jannaschii MJ0826.

It localises to the cell inner membrane. This is Inner membrane protein YbbJ (ybbJ) from Escherichia coli (strain K12).